We begin with the raw amino-acid sequence, 155 residues long: Antitoxin HicB 1 (155 aa).

The 55-residue stretch at 99–153 (MLNAFLDSKLTQIELANRMGVKKQEVTRIFDLRHSTKIDTVGKVASAIGHQLTLS) folds into the HTH cro/C1-type domain. A DNA-binding region (H-T-H motif) is located at residues 110 to 129 (QIELANRMGVKKQEVTRIFD).

The protein belongs to the HicB antitoxin family. As to quaternary structure, probably forms a complex with the probable mRNA interferase HicA1 (its cognate toxin); when complexed with HicA 1 inhibits the toxin activity.

In terms of biological role, antitoxin component of a type II toxin-antitoxin (TA) system. Functions as an mRNA interferase antitoxin preventing effects of the HicA 1 toxin. The sequence is that of Antitoxin HicB 1 (hicB1) from Photorhabdus laumondii subsp. laumondii (strain DSM 15139 / CIP 105565 / TT01) (Photorhabdus luminescens subsp. laumondii).